A 466-amino-acid polypeptide reads, in one-letter code: Ribulose bisphosphate carboxylase large chain (466 aa).

K5 is modified (N6,N6,N6-trimethyllysine). Positions 114 and 164 each coordinate substrate. The active-site Proton acceptor is the K166. K168 contributes to the substrate binding site. Positions 192, 194, and 195 each coordinate Mg(2+). At K192 the chain carries N6-carboxylysine. H285 acts as the Proton acceptor in catalysis. The substrate site is built by R286, H318, and S370.

Belongs to the RuBisCO large chain family. Type I subfamily. Heterohexadecamer of 8 large chains and 8 small chains. The cofactor is Mg(2+).

The protein localises to the plastid. The protein resides in the chloroplast. The enzyme catalyses 2 (2R)-3-phosphoglycerate + 2 H(+) = D-ribulose 1,5-bisphosphate + CO2 + H2O. The catalysed reaction is D-ribulose 1,5-bisphosphate + O2 = 2-phosphoglycolate + (2R)-3-phosphoglycerate + 2 H(+). Functionally, ruBisCO catalyzes two reactions: the carboxylation of D-ribulose 1,5-bisphosphate, the primary event in carbon dioxide fixation, as well as the oxidative fragmentation of the pentose substrate in the photorespiration process. Both reactions occur simultaneously and in competition at the same active site. The polypeptide is Ribulose bisphosphate carboxylase large chain (Lobelia sp).